We begin with the raw amino-acid sequence, 176 residues long: Putative metal-dependent hydrolase BLi00869/BLi00870/BL03027 (176 aa).

His-65, His-158, and His-162 together coordinate Zn(2+).

This sequence belongs to the metal hydrolase YfiT family. As to quaternary structure, homodimer. It depends on Zn(2+) as a cofactor.

It is found in the cytoplasm. Functionally, possible metal-dependent hydrolase. In Bacillus licheniformis (strain ATCC 14580 / DSM 13 / JCM 2505 / CCUG 7422 / NBRC 12200 / NCIMB 9375 / NCTC 10341 / NRRL NRS-1264 / Gibson 46), this protein is Putative metal-dependent hydrolase BLi00869/BLi00870/BL03027.